We begin with the raw amino-acid sequence, 631 residues long: Phosphomethylpyrimidine synthase (631 aa).

Residues N239, M268, Y297, H333, 353–355 (SRG), 394–397 (DGLR), and E433 each bind substrate. H437 is a binding site for Zn(2+). Y460 is a binding site for substrate. H501 serves as a coordination point for Zn(2+). [4Fe-4S] cluster is bound by residues C581, C584, and C589.

It belongs to the ThiC family. In terms of assembly, homodimer. [4Fe-4S] cluster serves as cofactor.

It catalyses the reaction 5-amino-1-(5-phospho-beta-D-ribosyl)imidazole + S-adenosyl-L-methionine = 4-amino-2-methyl-5-(phosphooxymethyl)pyrimidine + CO + 5'-deoxyadenosine + formate + L-methionine + 3 H(+). It participates in cofactor biosynthesis; thiamine diphosphate biosynthesis. Functionally, catalyzes the synthesis of the hydroxymethylpyrimidine phosphate (HMP-P) moiety of thiamine from aminoimidazole ribotide (AIR) in a radical S-adenosyl-L-methionine (SAM)-dependent reaction. The polypeptide is Phosphomethylpyrimidine synthase (Escherichia fergusonii (strain ATCC 35469 / DSM 13698 / CCUG 18766 / IAM 14443 / JCM 21226 / LMG 7866 / NBRC 102419 / NCTC 12128 / CDC 0568-73)).